Reading from the N-terminus, the 428-residue chain is Histidinol dehydrogenase (428 aa).

3 residues coordinate NAD(+): Tyr124, Gln186, and Asn209. Substrate contacts are provided by Ser233, Gln255, and His258. 2 residues coordinate Zn(2+): Gln255 and His258. Active-site proton acceptor residues include Glu322 and His323. His323, Asp356, Glu410, and His415 together coordinate substrate. Zn(2+) is bound at residue Asp356. Residue His415 participates in Zn(2+) binding.

This sequence belongs to the histidinol dehydrogenase family. Zn(2+) is required as a cofactor.

The catalysed reaction is L-histidinol + 2 NAD(+) + H2O = L-histidine + 2 NADH + 3 H(+). Its pathway is amino-acid biosynthesis; L-histidine biosynthesis; L-histidine from 5-phospho-alpha-D-ribose 1-diphosphate: step 9/9. In terms of biological role, catalyzes the sequential NAD-dependent oxidations of L-histidinol to L-histidinaldehyde and then to L-histidine. The chain is Histidinol dehydrogenase from Bacteroides fragilis (strain ATCC 25285 / DSM 2151 / CCUG 4856 / JCM 11019 / LMG 10263 / NCTC 9343 / Onslow / VPI 2553 / EN-2).